The chain runs to 178 residues: Large ribosomal subunit protein uL6 (178 aa).

It belongs to the universal ribosomal protein uL6 family. As to quaternary structure, part of the 50S ribosomal subunit.

Its function is as follows. This protein binds to the 23S rRNA, and is important in its secondary structure. It is located near the subunit interface in the base of the L7/L12 stalk, and near the tRNA binding site of the peptidyltransferase center. This is Large ribosomal subunit protein uL6 from Coxiella burnetii (strain CbuG_Q212) (Coxiella burnetii (strain Q212)).